We begin with the raw amino-acid sequence, 514 residues long: 2-isopropylmalate synthase (514 aa).

The region spanning 5 to 267 is the Pyruvate carboxyltransferase domain; that stretch reads VIIFDTTLRD…ETNIKHEEIH (263 aa). Asp14, His202, His204, and Asn238 together coordinate Mn(2+). The regulatory domain stretch occupies residues 392 to 514; the sequence is KLNYLSVQSG…AEIKERIATV (123 aa).

Belongs to the alpha-IPM synthase/homocitrate synthase family. LeuA type 1 subfamily. As to quaternary structure, homodimer. The cofactor is Mn(2+).

It is found in the cytoplasm. It carries out the reaction 3-methyl-2-oxobutanoate + acetyl-CoA + H2O = (2S)-2-isopropylmalate + CoA + H(+). Its pathway is amino-acid biosynthesis; L-leucine biosynthesis; L-leucine from 3-methyl-2-oxobutanoate: step 1/4. Its function is as follows. Catalyzes the condensation of the acetyl group of acetyl-CoA with 3-methyl-2-oxobutanoate (2-ketoisovalerate) to form 3-carboxy-3-hydroxy-4-methylpentanoate (2-isopropylmalate). This Photobacterium profundum (strain SS9) protein is 2-isopropylmalate synthase.